We begin with the raw amino-acid sequence, 378 residues long: Non-functional pseudokinase ZRK6 (378 aa).

The Protein kinase domain occupies 34 to 378 (DGKCNPIKNF…SNNRSQMSSI (345 aa)). ATP-binding positions include 40–48 (IKNFSYDQI) and Lys-83.

This sequence belongs to the protein kinase superfamily. Ser/Thr protein kinase family. ZRK subfamily. In terms of assembly, interacts with RPP13L4/ZAR1.

In Arabidopsis thaliana (Mouse-ear cress), this protein is Non-functional pseudokinase ZRK6.